A 144-amino-acid chain; its full sequence is D-aminoacyl-tRNA deacylase (144 aa).

The Gly-cisPro motif, important for rejection of L-amino acids signature appears at 136 to 137 (GP).

The protein belongs to the DTD family. Homodimer.

It is found in the cytoplasm. The enzyme catalyses glycyl-tRNA(Ala) + H2O = tRNA(Ala) + glycine + H(+). It carries out the reaction a D-aminoacyl-tRNA + H2O = a tRNA + a D-alpha-amino acid + H(+). An aminoacyl-tRNA editing enzyme that deacylates mischarged D-aminoacyl-tRNAs. Also deacylates mischarged glycyl-tRNA(Ala), protecting cells against glycine mischarging by AlaRS. Acts via tRNA-based rather than protein-based catalysis; rejects L-amino acids rather than detecting D-amino acids in the active site. By recycling D-aminoacyl-tRNA to D-amino acids and free tRNA molecules, this enzyme counteracts the toxicity associated with the formation of D-aminoacyl-tRNA entities in vivo and helps enforce protein L-homochirality. The sequence is that of D-aminoacyl-tRNA deacylase from Haemophilus influenzae (strain ATCC 51907 / DSM 11121 / KW20 / Rd).